The sequence spans 169 residues: S-ribosylhomocysteine lyase (169 aa).

Residues histidine 54, histidine 58, and cysteine 128 each contribute to the Fe cation site.

It belongs to the LuxS family. Homodimer. Requires Fe cation as cofactor.

The enzyme catalyses S-(5-deoxy-D-ribos-5-yl)-L-homocysteine = (S)-4,5-dihydroxypentane-2,3-dione + L-homocysteine. Involved in the synthesis of autoinducer 2 (AI-2) which is secreted by bacteria and is used to communicate both the cell density and the metabolic potential of the environment. The regulation of gene expression in response to changes in cell density is called quorum sensing. Catalyzes the transformation of S-ribosylhomocysteine (RHC) to homocysteine (HC) and 4,5-dihydroxy-2,3-pentadione (DPD). This Shewanella baltica (strain OS223) protein is S-ribosylhomocysteine lyase.